The sequence spans 581 residues: uncharacterized protein (581 aa).

Ser28 is subject to Phosphoserine. 11 helical membrane-spanning segments follow: residues Leu61–Ala81, Ala100–Leu120, Cys125–Lys145, Ile187–Ala207, Trp214–Phe234, Ile340–Leu360, Ala382–Gly402, Leu426–Gly446, Val458–Leu478, Val486–Phe506, and Ile522–Gly542.

The protein belongs to the major facilitator superfamily.

Its subcellular location is the cytoplasm. The protein resides in the cell cortex. It is found in the membrane. This is an uncharacterized protein from Schizosaccharomyces pombe (strain 972 / ATCC 24843) (Fission yeast).